The following is an 827-amino-acid chain: 4-hydroxy-3-methylbut-2-enyl diphosphate reductase (827 aa).

The interval 1–284 (MEIIRAKHMG…MNIEKKVRGI (284 aa)) is 4-hydroxy-3-methylbut-2-enyl diphosphate reductase. [4Fe-4S] cluster is bound at residue Cys12. (2E)-4-hydroxy-3-methylbut-2-enyl diphosphate-binding residues include His40 and His79. Positions 40 and 79 each coordinate dimethylallyl diphosphate. The isopentenyl diphosphate site is built by His40 and His79. Residue Cys101 participates in [4Fe-4S] cluster binding. (2E)-4-hydroxy-3-methylbut-2-enyl diphosphate is bound at residue His129. Residue His129 coordinates dimethylallyl diphosphate. His129 is a binding site for isopentenyl diphosphate. The active-site Proton donor is the Glu131. Thr168 contacts (2E)-4-hydroxy-3-methylbut-2-enyl diphosphate. Cys196 is a [4Fe-4S] cluster binding site. 4 residues coordinate (2E)-4-hydroxy-3-methylbut-2-enyl diphosphate: Ser224, Ser225, Asn226, and Ser268. Positions 224, 225, 226, and 268 each coordinate dimethylallyl diphosphate. Isopentenyl diphosphate is bound by residues Ser224, Ser225, Asn226, and Ser268. 4 consecutive S1 motif domains span residues 477 to 545 (GQIV…LSIK), 562 to 632 (DDEI…LGIK), 649 to 716 (DTVI…GSLK), and 733 to 802 (GTTV…LSIK).

It in the N-terminal section; belongs to the IspH family. Requires [4Fe-4S] cluster as cofactor.

It carries out the reaction isopentenyl diphosphate + 2 oxidized [2Fe-2S]-[ferredoxin] + H2O = (2E)-4-hydroxy-3-methylbut-2-enyl diphosphate + 2 reduced [2Fe-2S]-[ferredoxin] + 2 H(+). It catalyses the reaction dimethylallyl diphosphate + 2 oxidized [2Fe-2S]-[ferredoxin] + H2O = (2E)-4-hydroxy-3-methylbut-2-enyl diphosphate + 2 reduced [2Fe-2S]-[ferredoxin] + 2 H(+). It functions in the pathway isoprenoid biosynthesis; dimethylallyl diphosphate biosynthesis; dimethylallyl diphosphate from (2E)-4-hydroxy-3-methylbutenyl diphosphate: step 1/1. It participates in isoprenoid biosynthesis; isopentenyl diphosphate biosynthesis via DXP pathway; isopentenyl diphosphate from 1-deoxy-D-xylulose 5-phosphate: step 6/6. In terms of biological role, catalyzes the conversion of 1-hydroxy-2-methyl-2-(E)-butenyl 4-diphosphate (HMBPP) into a mixture of isopentenyl diphosphate (IPP) and dimethylallyl diphosphate (DMAPP). Acts in the terminal step of the DOXP/MEP pathway for isoprenoid precursor biosynthesis. The chain is 4-hydroxy-3-methylbut-2-enyl diphosphate reductase from Fusobacterium nucleatum subsp. nucleatum (strain ATCC 25586 / DSM 15643 / BCRC 10681 / CIP 101130 / JCM 8532 / KCTC 2640 / LMG 13131 / VPI 4355).